Reading from the N-terminus, the 392-residue chain is Selenide, water dikinase 1 (392 aa).

Serine 2 carries the N-acetylserine modification. The active site involves cysteine 31. ATP is bound by residues lysine 32, 67–69 (GMD), aspartate 87, aspartate 110, and 161–164 (GGQT). Aspartate 69 is a Mg(2+) binding site. Aspartate 110 is a Mg(2+) binding site. A Mg(2+)-binding site is contributed by aspartate 265.

Belongs to the selenophosphate synthase 1 family. Class II subfamily. In terms of assembly, homodimer. Heterodimer with isoform 3. Homodimer. Heterodimer with isoform 4. As to quaternary structure, homodimer. Heterodimer with isoform 1. In terms of assembly, homodimer. Heterodimer with isoform 2. Mg(2+) serves as cofactor. In terms of tissue distribution, gradually expressed during the cell cycle until G2/M phase and then decreases. As to expression, gradually expressed during the cell cycle until S phase and then decreases.

The protein resides in the cell membrane. Its subcellular location is the nucleus membrane. The protein localises to the cytoplasm. It catalyses the reaction hydrogenselenide + ATP + H2O = selenophosphate + AMP + phosphate + 2 H(+). With respect to regulation, activated by phosphate ions and by potassium ions. In terms of biological role, synthesizes selenophosphate from selenide and ATP. This Homo sapiens (Human) protein is Selenide, water dikinase 1 (SEPHS1).